Consider the following 1756-residue polypeptide: Protein TIC 214 (1756 aa).

6 helical membrane-spanning segments follow: residues 18 to 38 (VSGP…LPFG), 54 to 74 (GYGI…FLSM), 79 to 99 (IYAA…YMFF), 128 to 148 (LFMD…NPVL), 163 to 183 (ISFM…LTIF), and 210 to 230 (FSLL…LPFL). A disordered region spans residues 1469-1504 (KNKQVEDGQDKNGQVEDQDGQDQDGQVEDQQTDGKK). Positions 1471–1482 (KQVEDGQDKNGQ) are enriched in basic and acidic residues. A compositionally biased stretch (acidic residues) spans 1484–1499 (EDQDGQDQDGQVEDQQ).

It belongs to the TIC214 family. In terms of assembly, part of the Tic complex.

The protein resides in the plastid. The protein localises to the chloroplast inner membrane. Its function is as follows. Involved in protein precursor import into chloroplasts. May be part of an intermediate translocation complex acting as a protein-conducting channel at the inner envelope. The sequence is that of Protein TIC 214 from Pinus thunbergii (Japanese black pine).